Here is a 114-residue protein sequence, read N- to C-terminus: UPF0145 protein PYRAB04900 (114 aa).

It belongs to the UPF0145 family.

The polypeptide is UPF0145 protein PYRAB04900 (Pyrococcus abyssi (strain GE5 / Orsay)).